The sequence spans 24 residues: Grammistin Gs G (24 aa).

It belongs to the grammistin family. Group 1 subfamily. As to quaternary structure, exists as aggregates of 3-4 molecules. In terms of tissue distribution, expressed by the skin glands.

The protein localises to the secreted. Functionally, thanks to its abundant amphiphilic alpha-helices, it may integrate into membrane phospholipids, leading to lysis of the membrane. Its high hemolytic activity is inhibited by phospholipids, but not by cholesterol. Has antibacterial activity with a broad spectrum against various species of bacteria including both Gram-positive and Gram-negative groups. Also has high ichthyotoxic activity. The chain is Grammistin Gs G from Grammistes sexlineatus (Goldenstriped soapfish).